A 447-amino-acid chain; its full sequence is GTPase Der (447 aa).

2 EngA-type G domains span residues 3 to 167 and 181 to 354; these read PVIA…VQER and VKIA…AAAM. GTP contacts are provided by residues 9-16, 56-60, 119-122, 187-194, 234-238, and 299-302; these read GRPNVGKS, DTGGF, NKAE, DTAGL, and NKWD. The KH-like domain maps to 355-439; the sequence is VKLPTPQLTR…PLRIEFRTNK (85 aa).

The protein belongs to the TRAFAC class TrmE-Era-EngA-EngB-Septin-like GTPase superfamily. EngA (Der) GTPase family. Associates with the 50S ribosomal subunit.

Functionally, GTPase that plays an essential role in the late steps of ribosome biogenesis. The protein is GTPase Der of Cupriavidus taiwanensis (strain DSM 17343 / BCRC 17206 / CCUG 44338 / CIP 107171 / LMG 19424 / R1) (Ralstonia taiwanensis (strain LMG 19424)).